An 873-amino-acid chain; its full sequence is Bifunctional uridylyltransferase/uridylyl-removing enzyme (873 aa).

The interval 1-332 is uridylyltransferase; the sequence is MAFQSPLTFN…NGGETEPAVI (332 aa). A uridylyl-removing region spans residues 333 to 692; it reads INEDFQRRGR…MSKKATRGGT (360 aa). Positions 451–573 constitute an HD domain; the sequence is VDEHSVRLLN…VRDEERLEYL (123 aa). ACT domains follow at residues 693-773 and 800-873; these read EVFV…VKTR and LMEL…ELAP.

It belongs to the GlnD family. Mg(2+) is required as a cofactor.

It carries out the reaction [protein-PII]-L-tyrosine + UTP = [protein-PII]-uridylyl-L-tyrosine + diphosphate. The enzyme catalyses [protein-PII]-uridylyl-L-tyrosine + H2O = [protein-PII]-L-tyrosine + UMP + H(+). With respect to regulation, uridylyltransferase (UTase) activity is inhibited by glutamine, while glutamine activates uridylyl-removing (UR) activity. Its function is as follows. Modifies, by uridylylation and deuridylylation, the PII regulatory proteins (GlnB and homologs), in response to the nitrogen status of the cell that GlnD senses through the glutamine level. Under low glutamine levels, catalyzes the conversion of the PII proteins and UTP to PII-UMP and PPi, while under higher glutamine levels, GlnD hydrolyzes PII-UMP to PII and UMP (deuridylylation). Thus, controls uridylylation state and activity of the PII proteins, and plays an important role in the regulation of nitrogen assimilation and metabolism. This Vibrio vulnificus (strain YJ016) protein is Bifunctional uridylyltransferase/uridylyl-removing enzyme.